A 131-amino-acid chain; its full sequence is Major pollen allergen Pla l 1 (131 aa).

3 cysteine pairs are disulfide-bonded: Cys-17–Cys-86, Cys-20–Cys-131, and Cys-42–Cys-74. His-21, Asp-45, Asp-73, and Glu-88 together coordinate Zn(2+). An N-linked (GlcNAc...) asparagine glycan is attached at Asn-107.

This sequence belongs to the Ole e I family. In terms of processing, exists in two variants: glycosylated and non-glycosylated. Carries a complex, major N-linked glycan, with a alpha-1,3-fucose residue in its structure and probably also a beta-1,2-xylose. The average modification of molecular mass due to glycosylation is approximately 969 Da.

It is found in the secreted. The sequence is that of Major pollen allergen Pla l 1 from Plantago lanceolata (English plantain).